Reading from the N-terminus, the 379-residue chain is 1-deoxy-D-xylulose 5-phosphate reductoisomerase (379 aa).

Thr-10, Gly-11, Ser-12, Ile-13, Arg-38, Asn-39, and Asn-121 together coordinate NADPH. 1-deoxy-D-xylulose 5-phosphate is bound at residue Lys-122. Glu-123 contributes to the NADPH binding site. A Mn(2+)-binding site is contributed by Asp-147. Residues Ser-148, Glu-149, Ser-173, and His-196 each contribute to the 1-deoxy-D-xylulose 5-phosphate site. A Mn(2+)-binding site is contributed by Glu-149. Gly-202 provides a ligand contact to NADPH. Residues Ser-209, Asn-214, Lys-215, and Glu-218 each contribute to the 1-deoxy-D-xylulose 5-phosphate site. Glu-218 lines the Mn(2+) pocket.

Belongs to the DXR family. Mg(2+) serves as cofactor. The cofactor is Mn(2+).

It catalyses the reaction 2-C-methyl-D-erythritol 4-phosphate + NADP(+) = 1-deoxy-D-xylulose 5-phosphate + NADPH + H(+). It participates in isoprenoid biosynthesis; isopentenyl diphosphate biosynthesis via DXP pathway; isopentenyl diphosphate from 1-deoxy-D-xylulose 5-phosphate: step 1/6. Its function is as follows. Catalyzes the NADPH-dependent rearrangement and reduction of 1-deoxy-D-xylulose-5-phosphate (DXP) to 2-C-methyl-D-erythritol 4-phosphate (MEP). The chain is 1-deoxy-D-xylulose 5-phosphate reductoisomerase from Chlamydia trachomatis serovar A (strain ATCC VR-571B / DSM 19440 / HAR-13).